The primary structure comprises 34 residues: Photosystem II reaction center protein M (34 aa).

Residues 7-27 traverse the membrane as a helical segment; sequence GFVASLMFILVPAIFLIVLYI.

It belongs to the PsbM family. As to quaternary structure, PSII is composed of 1 copy each of membrane proteins PsbA, PsbB, PsbC, PsbD, PsbE, PsbF, PsbH, PsbI, PsbJ, PsbK, PsbL, PsbM, PsbT, PsbX, PsbY, PsbZ, Psb30/Ycf12, peripheral proteins PsbO, CyanoQ (PsbQ), PsbU, PsbV and a large number of cofactors. It forms dimeric complexes.

Its subcellular location is the cellular thylakoid membrane. One of the components of the core complex of photosystem II (PSII). PSII is a light-driven water:plastoquinone oxidoreductase that uses light energy to abstract electrons from H(2)O, generating O(2) and a proton gradient subsequently used for ATP formation. It consists of a core antenna complex that captures photons, and an electron transfer chain that converts photonic excitation into a charge separation. This subunit is found at the monomer-monomer interface. The protein is Photosystem II reaction center protein M of Synechococcus sp. (strain CC9902).